The chain runs to 400 residues: Sensory histidine kinase/phosphatase NtrB (400 aa).

Low complexity-rich tracts occupy residues Met-1 to Leu-10 and Arg-18 to Val-27. Residues Met-1–Val-27 are disordered. The PAS domain occupies Pro-29 to Arg-99. The Histidine kinase domain maps to Met-163–Asp-381. His-166 is subject to Phosphohistidine; by autocatalysis.

Autophosphorylated.

The protein resides in the cytoplasm. It carries out the reaction ATP + protein L-histidine = ADP + protein N-phospho-L-histidine.. Member of the two-component regulatory system NtrB/NtrC, which controls expression of the nitrogen-regulated (ntr) genes in response to nitrogen limitation. Under conditions of nitrogen limitation, NtrB autophosphorylates and transfers the phosphoryl group to NtrC. In the presence of nitrogen, acts as a phosphatase that dephosphorylates and inactivates NtrC. This Azospirillum brasilense protein is Sensory histidine kinase/phosphatase NtrB.